We begin with the raw amino-acid sequence, 80 residues long: D-alanyl carrier protein 1 (80 aa).

Residues 1 to 80 (MTMDDTKATV…KIVAKVENLQ (80 aa)) enclose the Carrier domain. S38 bears the O-(pantetheine 4'-phosphoryl)serine mark.

This sequence belongs to the DltC family. 4'-phosphopantetheine is transferred from CoA to a specific serine of apo-DCP.

The protein localises to the cytoplasm. It participates in cell wall biogenesis; lipoteichoic acid biosynthesis. Carrier protein involved in the D-alanylation of lipoteichoic acid (LTA). The loading of thioester-linked D-alanine onto DltC is catalyzed by D-alanine--D-alanyl carrier protein ligase DltA. The DltC-carried D-alanyl group is further transferred to cell membrane phosphatidylglycerol (PG) by forming an ester bond, probably catalyzed by DltD. D-alanylation of LTA plays an important role in modulating the properties of the cell wall in Gram-positive bacteria, influencing the net charge of the cell wall. This is D-alanyl carrier protein 1 from Lactiplantibacillus plantarum (strain ATCC BAA-793 / NCIMB 8826 / WCFS1) (Lactobacillus plantarum).